Here is a 229-residue protein sequence, read N- to C-terminus: Sodium channel modifier 1 (229 aa).

Ser-2 bears the Phosphoserine mark. The Bipartite nuclear localization signal signature appears at 4–20; sequence KREGDDWSQLNVLKKRR. Residues 42 to 74 form a Matrin-type zinc finger; the sequence is FACAICPHRPVLDTLAMLTAHRAGKKHLSSLKL. Lys-67 is covalently cross-linked (Glycyl lysine isopeptide (Lys-Gly) (interchain with G-Cter in SUMO2)). Disordered regions lie at residues 80–105 and 128–187; these read QTGK…EAPL and RRKH…TKRR. Over residues 82–92 the composition is skewed to polar residues; sequence GKGTEQNPRQQ. Basic and acidic residues predominate over residues 157 to 171; sequence ISKEPEPRERSDAKE. Residues Ser-182 and Ser-218 each carry the phosphoserine modification. Residues 187–229 are required for interaction with LUC7L2; that stretch reads RVLNHYLTLRSSGWVPDGRGRWIKDENVEFDSDEEEPPDLPLD.

In terms of assembly, component of the minor spliceosome. Within this complex, interacts with RNF113A, as well as with SF3B1/SF3b155, SF3B2/SF3b145, SF3B3/SF3b130 and CDC5L. May interact with LUC7L2 and SNRNP70.

It is found in the nucleus. Its subcellular location is the nucleoplasm. It localises to the nucleus speckle. In terms of biological role, as a component of the minor spliceosome, involved in the splicing of U12-type introns in pre-mRNAs. Plays a role in the regulation of primary cilia length and Hedgehog signaling. This is Sodium channel modifier 1 (Scnm1) from Mus musculus (Mouse).